Reading from the N-terminus, the 323-residue chain is Lipoyl synthase (323 aa).

Residues 1–27 are disordered; it reads MVTILDRTSSDEKRIRHPEKAHRPDTE. Cys-61, Cys-66, Cys-72, Cys-87, Cys-91, Cys-94, and Ser-300 together coordinate [4Fe-4S] cluster. Residues 73-289 enclose the Radical SAM core domain; that stretch reads WEKKHATFMI…ETVAYAKGFL (217 aa).

Belongs to the radical SAM superfamily. Lipoyl synthase family. Requires [4Fe-4S] cluster as cofactor.

It localises to the cytoplasm. It catalyses the reaction [[Fe-S] cluster scaffold protein carrying a second [4Fe-4S](2+) cluster] + N(6)-octanoyl-L-lysyl-[protein] + 2 oxidized [2Fe-2S]-[ferredoxin] + 2 S-adenosyl-L-methionine + 4 H(+) = [[Fe-S] cluster scaffold protein] + N(6)-[(R)-dihydrolipoyl]-L-lysyl-[protein] + 4 Fe(3+) + 2 hydrogen sulfide + 2 5'-deoxyadenosine + 2 L-methionine + 2 reduced [2Fe-2S]-[ferredoxin]. It functions in the pathway protein modification; protein lipoylation via endogenous pathway; protein N(6)-(lipoyl)lysine from octanoyl-[acyl-carrier-protein]: step 2/2. In terms of biological role, catalyzes the radical-mediated insertion of two sulfur atoms into the C-6 and C-8 positions of the octanoyl moiety bound to the lipoyl domains of lipoate-dependent enzymes, thereby converting the octanoylated domains into lipoylated derivatives. This Agrobacterium fabrum (strain C58 / ATCC 33970) (Agrobacterium tumefaciens (strain C58)) protein is Lipoyl synthase.